The chain runs to 101 residues: Small ribosomal subunit protein uS14A (101 aa).

Residues 31–69 (IAAPGSSPEERAAAQQELRRQPRDASATRLRNRDAVDGR) are disordered. Positions 38–53 (PEERAAAQQELRRQPR) are enriched in basic and acidic residues.

It belongs to the universal ribosomal protein uS14 family. In terms of assembly, part of the 30S ribosomal subunit. Contacts proteins S3 and S10.

Functionally, binds 16S rRNA, required for the assembly of 30S particles and may also be responsible for determining the conformation of the 16S rRNA at the A site. The chain is Small ribosomal subunit protein uS14A from Saccharopolyspora erythraea (strain ATCC 11635 / DSM 40517 / JCM 4748 / NBRC 13426 / NCIMB 8594 / NRRL 2338).